An 84-amino-acid polypeptide reads, in one-letter code: Mu-Sparatoxin-Hp1 (84 aa).

The N-terminal stretch at 1 to 20 (MKIAIVMTLLLVAFSTASFA) is a signal peptide. Residues 21 to 35 (IEPIERAALDLVMAR) constitute a propeptide that is removed on maturation. 3 disulfide bridges follow: Cys-54-Cys-68, Cys-61-Cys-73, and Cys-67-Cys-78. Position 82 is a leucine amide (Leu-82).

In terms of tissue distribution, expressed by the venom gland.

It localises to the secreted. Its function is as follows. Weakly nhibits voltage-gated sodium channels Nav1.7/SCN9A. High concentration of the toxin (3 uM) inhibits Nav1.7/SCN9A currents by 79%. The polypeptide is Mu-Sparatoxin-Hp1 (Heteropoda pingtungensis (Pingtung huntsman spider)).